A 250-amino-acid polypeptide reads, in one-letter code: DNA repair protein RecO (250 aa).

The protein belongs to the RecO family.

In terms of biological role, involved in DNA repair and RecF pathway recombination. The polypeptide is DNA repair protein RecO (Staphylococcus aureus (strain COL)).